The sequence spans 68 residues: Large ribosomal subunit protein uL29 (68 aa).

This sequence belongs to the universal ribosomal protein uL29 family.

The protein is Large ribosomal subunit protein uL29 (rpl29) of Pyrococcus abyssi (strain GE5 / Orsay).